Consider the following 13041-residue polypeptide: Nonribosomal peptide synthetase kk1B (13041 aa).

The tract at residues 267–663 (ANRVVDTPQK…GRRDSQIKIR (397 aa)) is adenylation 1. A Carrier 1 domain is found at 788–864 (ASLMTEGITL…GLINVMQQSS (77 aa)). Ser825 carries the O-(pantetheine 4'-phosphoryl)serine modification. A condensation 1 region spans residues 882–1313 (SFAQGRLWFL…TPIAHLQLTD (432 aa)). The tract at residues 1341-1736 (FQKQVAACPN…GRMDFQIKIR (396 aa)) is adenylation 2. One can recognise a Carrier 2 domain in the interval 1865–1939 (AARNEIEAVL…NLAATIKRGS (75 aa)). The residue at position 1899 (Ser1899) is an O-(pantetheine 4'-phosphoryl)serine. Residues 1957-2383 (SFAQGRLWFL…DQPQTPLALL (427 aa)) are condensation 2. Residues 2418-2812 (QVAASPNATA…GRMDQQIKIR (395 aa)) form an adenylation 3 region. Positions 2891-3023 (VGNDFMGWTS…EYLSKVLYAL (133 aa)) are methyltransferase (M) domain 1. The 75-residue stretch at 3353-3427 (GARNETEAVL…DLAASIRRGS (75 aa)) folds into the Carrier 3 domain. At Ser3387 the chain carries O-(pantetheine 4'-phosphoryl)serine. A condensation 3 region spans residues 3445–3869 (SFAQGRLWFL…DQPQIPIAVL (425 aa)). The segment at 3901–4300 (FRAQVVACPD…GRMDQQVKIR (400 aa)) is adenylation 4. The Carrier 4 domain maps to 4412–4486 (PPRNEIETIL…NLAAAVQRGS (75 aa)). An O-(pantetheine 4'-phosphoryl)serine modification is found at Ser4446. Residues 4504–4935 (SFAQGRLWFL…TPIAALSLTD (432 aa)) are condensation 4. The interval 4963–5362 (FREQVATYPD…GRMDRQLKIR (400 aa)) is adenylation 5. The segment at 5430 to 5567 (TYAELDTLVK…VAQYFPTPEY (138 aa)) is methyltransferase (M) domain 2. The Carrier 5 domain maps to 5897–5971 (QPRNEVEAVL…DLAAAIQRGS (75 aa)). Ser5931 bears the O-(pantetheine 4'-phosphoryl)serine mark. Residues 5989 to 6416 (SYAQGRLWFL…DQPQTPLALL (428 aa)) are condensation 5. Positions 6451-6845 (QVAASPNATA…GRMDQQIKIR (395 aa)) are adenylation 6. The interval 6924 to 7056 (VGNDFMGWTS…EYLSKVLYAL (133 aa)) is methyltransferase (M) domain 3. The Carrier 6 domain maps to 7386–7460 (GARNEIEAAL…DLAGAVQRGS (75 aa)). An O-(pantetheine 4'-phosphoryl)serine modification is found at Ser7420. The segment at 7478–7901 (SFAQGRLWFL…GLETPRLPIS (424 aa)) is condensation 6. The segment at 7934 to 8335 (FRTQVAASPD…GRMDRQLKIR (402 aa)) is adenylation 7. The tract at residues 8404–8540 (YAEIEEIDSS…AQYFPSPEYL (137 aa)) is methyltransferase (M) domain 4. In terms of domain architecture, Carrier 7 spans 8871-8945 (GPRNEIEALL…DLAASIQRGS (75 aa)). Ser8905 carries the O-(pantetheine 4'-phosphoryl)serine modification. The segment at 8963–9392 (SFAQGRLWFL…PKTPIAVLPL (430 aa)) is condensation 7. The adenylation 8 stretch occupies residues 9422-9822 (FRQQVAARPD…SRMDQQVKIR (401 aa)). The 75-residue stretch at 9943-10017 (PPTNDMERIL…DLASTIKQDS (75 aa)) folds into the Carrier 8 domain. At Ser9977 the chain carries O-(pantetheine 4'-phosphoryl)serine. Residues 10035-10462 (SFAQGRLWFL…ETPQTPLAVL (428 aa)) form a condensation 8 region. Residues 10494–10892 (FRAQVAACPD…GRMDQQIKIR (399 aa)) form an adenylation 9 region. The segment at 10959 to 11105 (IYAEIEEIDS…EYLADVVGAL (147 aa)) is methyltransferase (M) domain 5. A Carrier 9 domain is found at 11428-11502 (SARNEVEAVL…DLAASIERNS (75 aa)). An O-(pantetheine 4'-phosphoryl)serine modification is found at Ser11462. The tract at residues 11520–11945 (SFAQGRLWFL…EQPQTPIAVL (426 aa)) is condensation 9. Positions 11977 to 12377 (FRDQVAANPR…GRMDQQIKIR (401 aa)) are adenylation 10. In terms of domain architecture, Carrier 10 spans 12495 to 12569 (VPRNELEASL…DLALKVSSYI (75 aa)). Ser12529 carries the O-(pantetheine 4'-phosphoryl)serine modification. Residues 12647–13032 (FPANADCDKI…RMHEEFCDII (386 aa)) form a condensation 10 region.

The protein belongs to the NRP synthetase family.

It participates in secondary metabolite biosynthesis. Nonribosomal peptide synthetase; part of the gene cluster that mediates the biosynthesis of KK-1, a novel cyclic depsipeptide with 10 residues which is a promising active compound with high activity against many plant pathogens, especially Botrytis cinerea. The nonribosomal peptide synthetase (NRPS) kk1B catalyzes the elongation and cyclization of the decapeptide chain composed of 1 D-lactic acid residue (D-Lac), 1 pipecolic acid residue (Pip), 1 aspartic acid residue (Asp), 1 isoleucine residue (Ile), 1 glycine residue (Gly), 1 tyrosine residue (Tyr) and 4 valine residues (Val). The Asp, Ile and 3 Val residues are N-methylated by the 5 methyltransferase domains from the NRPS (found in modules 3, 5, 6, 7 and 9), whereas the Tyr residue is O-methylated by the cluster encoded O-methyltransferase kk1A. Cyclization with the hydroxy group of the D-lactic acid as a nucleophile is presumed to occur in the final module of NRPS, resulting in the formation of the depsipeptide ester bond through macrocyclization by the C-terminal C domain. The thioesterase kk1J is likely to be involved in the corrective mechanism of peptide chain synthesis. The D-lactate dehydrogenase kk1H is involved in the synthesis of D-lactic acid from pyruvic acid, which is recognized by the A domain of the first kk1B module. The pyrroline-5-carboxylate reductase kk1I is involved in the synthesis of the L-pipecolic acid residue of KK-1 from delta-1-pyrroline-5-carboxylate (P5C), a metabolic intermediate of lysine. It is still unclear how kk1C and kk1D are involved in the production of KK-1. In Curvularia clavata, this protein is Nonribosomal peptide synthetase kk1B.